The chain runs to 1035 residues: Glycine dehydrogenase (decarboxylating), mitochondrial (1035 aa).

The N-terminal 64 residues, 1-64 (MERARKLANR…KSFNTQQARS (64 aa)), are a transit peptide targeting the mitochondrion. The residue at position 771 (lysine 771) is an N6-(pyridoxal phosphate)lysine.

The protein belongs to the GcvP family. In terms of assembly, homodimer. The glycine cleavage system is composed of four proteins: P, T, L and H. The cofactor is pyridoxal 5'-phosphate.

It localises to the mitochondrion. The catalysed reaction is N(6)-[(R)-lipoyl]-L-lysyl-[glycine-cleavage complex H protein] + glycine + H(+) = N(6)-[(R)-S(8)-aminomethyldihydrolipoyl]-L-lysyl-[glycine-cleavage complex H protein] + CO2. In terms of biological role, the glycine cleavage system catalyzes the degradation of glycine. The P protein binds the alpha-amino group of glycine through its pyridoxal phosphate cofactor; CO(2) is released and the remaining methylamine moiety is then transferred to the lipoamide cofactor of the H protein. The protein is Glycine dehydrogenase (decarboxylating), mitochondrial (GDCSP) of Solanum tuberosum (Potato).